Consider the following 61-residue polypeptide: Large ribosomal subunit protein uL30 (61 aa).

This sequence belongs to the universal ribosomal protein uL30 family. As to quaternary structure, part of the 50S ribosomal subunit.

The protein is Large ribosomal subunit protein uL30 of Mycolicibacterium gilvum (strain PYR-GCK) (Mycobacterium gilvum (strain PYR-GCK)).